Consider the following 413-residue polypeptide: Probable alpha-amylase 2 (413 aa).

Substrate-binding positions include 74 to 75 (YL) and 191 to 196 (RFDFAR). D193 acts as the Nucleophile in catalysis. The Proton donor role is filled by E218. Residues W220, S222, Q239, D246, K280, 286–288 (GWW), H299, Q305, K386, and W411 contribute to the substrate site.

It belongs to the glycosyl hydrolase 13 family. The cofactor is Ca(2+). Expressed in developing siliques.

The protein localises to the cytoplasm. It localises to the cytosol. The enzyme catalyses Endohydrolysis of (1-&gt;4)-alpha-D-glucosidic linkages in polysaccharides containing three or more (1-&gt;4)-alpha-linked D-glucose units.. Probable alpha-amylase that does not seem to be required for breakdown of transitory starch in leaves. This chain is Probable alpha-amylase 2 (AMY2), found in Arabidopsis thaliana (Mouse-ear cress).